The sequence spans 237 residues: tRNA-splicing endonuclease subunit Sen2-1 (237 aa).

Active-site residues include tyrosine 148, histidine 156, and lysine 190.

The protein belongs to the tRNA-intron endonuclease family. In terms of assembly, tRNA splicing endonuclease is a heterotetramer composed of SEN2, SEN15, SEN34/LENG5 and SEN54.

Its subcellular location is the nucleus. The catalysed reaction is pretRNA = a 3'-half-tRNA molecule with a 5'-OH end + a 5'-half-tRNA molecule with a 2',3'-cyclic phosphate end + an intron with a 2',3'-cyclic phosphate and a 5'-hydroxyl terminus.. Functionally, constitutes one of the two catalytic subunit of the tRNA-splicing endonuclease complex, a complex responsible for identification and cleavage of the splice sites in pre-tRNA. It cleaves pre-tRNA at the 5'- and 3'-splice sites to release the intron. The products are an intron and two tRNA half-molecules bearing 2',3'-cyclic phosphate and 5'-OH termini. There are no conserved sequences at the splice sites, but the intron is invariably located at the same site in the gene, placing the splice sites an invariant distance from the constant structural features of the tRNA body. Probably carries the active site for 5'-splice site cleavage. The polypeptide is tRNA-splicing endonuclease subunit Sen2-1 (SEN1) (Arabidopsis thaliana (Mouse-ear cress)).